Here is a 237-residue protein sequence, read N- to C-terminus: NAD(P)H-quinone oxidoreductase subunit K (237 aa).

Residues cysteine 52, cysteine 53, cysteine 117, and cysteine 148 each contribute to the [4Fe-4S] cluster site.

Belongs to the complex I 20 kDa subunit family. In terms of assembly, NDH-1 can be composed of about 15 different subunits; different subcomplexes with different compositions have been identified which probably have different functions. It depends on [4Fe-4S] cluster as a cofactor.

It is found in the cellular thylakoid membrane. The enzyme catalyses a plastoquinone + NADH + (n+1) H(+)(in) = a plastoquinol + NAD(+) + n H(+)(out). It carries out the reaction a plastoquinone + NADPH + (n+1) H(+)(in) = a plastoquinol + NADP(+) + n H(+)(out). In terms of biological role, NDH-1 shuttles electrons from an unknown electron donor, via FMN and iron-sulfur (Fe-S) centers, to quinones in the respiratory and/or the photosynthetic chain. The immediate electron acceptor for the enzyme in this species is believed to be plastoquinone. Couples the redox reaction to proton translocation, and thus conserves the redox energy in a proton gradient. Cyanobacterial NDH-1 also plays a role in inorganic carbon-concentration. This Thermosynechococcus vestitus (strain NIES-2133 / IAM M-273 / BP-1) protein is NAD(P)H-quinone oxidoreductase subunit K.